The sequence spans 293 residues: 33 kDa chaperonin (293 aa).

2 disulfide bridges follow: cysteine 236–cysteine 238 and cysteine 269–cysteine 272.

This sequence belongs to the HSP33 family. Under oxidizing conditions two disulfide bonds are formed involving the reactive cysteines. Under reducing conditions zinc is bound to the reactive cysteines and the protein is inactive.

Its subcellular location is the cytoplasm. Its function is as follows. Redox regulated molecular chaperone. Protects both thermally unfolding and oxidatively damaged proteins from irreversible aggregation. Plays an important role in the bacterial defense system toward oxidative stress. The sequence is that of 33 kDa chaperonin from Lactobacillus delbrueckii subsp. bulgaricus (strain ATCC BAA-365 / Lb-18).